The sequence spans 309 residues: tRNA pseudouridine synthase B (309 aa).

The active-site Nucleophile is the Asp45.

It belongs to the pseudouridine synthase TruB family. Type 1 subfamily.

The enzyme catalyses uridine(55) in tRNA = pseudouridine(55) in tRNA. Functionally, responsible for synthesis of pseudouridine from uracil-55 in the psi GC loop of transfer RNAs. The sequence is that of tRNA pseudouridine synthase B from Oleidesulfovibrio alaskensis (strain ATCC BAA-1058 / DSM 17464 / G20) (Desulfovibrio alaskensis).